Reading from the N-terminus, the 1426-residue chain is Epidermal growth factor receptor (1426 aa).

A signal peptide spans 1-30 (MLLRRRNGPCPFPLLLLLLAHCICIWPASA). At 31–868 (ARDRYARQNN…SKITANLDVN (838 aa)) the chain is on the extracellular side. N128, N241, N419, N443, N482, N569, N599, N617, N816, N823, and N828 each carry an N-linked (GlcNAc...) asparagine glycan. A helical membrane pass occupies residues 869-889 (MIFIITGAVLVPTICILCVVT). Topologically, residues 890–1426 (YICRQKQKAK…HRNRNTETRV (537 aa)) are cytoplasmic. The residue at position 902 (T902) is a Phosphothreonine; by PKC. A Protein kinase domain is found at 938 to 1198 (LRKGGVLGMG…QLTTVFAEFA (261 aa)). ATP contacts are provided by residues 944–952 (LGMGAFGRV) and K971. D1063 (proton acceptor) is an active-site residue. A disordered region spans residues 1232–1297 (PTTDGSEAIA…DSSAREVGVG (66 aa)). Positions 1257–1276 (HRTDCTDEMPKLNRYCKDPS) are enriched in basic and acidic residues. Y1310 is modified (phosphotyrosine; by autocatalysis).

This sequence belongs to the protein kinase superfamily. Tyr protein kinase family. EGF receptor subfamily. In terms of assembly, homodimer. Binding of the ligand spitz triggers homodimerization of the receptor however, it is able to form dimers, albeit weakly, in the absence of spitz. Interacts (when phosphorylated on tyrosine residues) with Vav (via SH2 domain). Interacts (when ubiquitinated) with Graf. May interact (when phosphorylated) with EGFRAP (via SH2 domain). In terms of processing, ubiquitination by Cbl in response to high spi, promotes its interaction with Graf and thus facilitates its GPI-enriched endocytic compartment (GEEC) mediated endocytosis and its subsequent degradation. Ubiquitously expressed in embryos. In larvae, uniform expression is seen in wing disks, genital disk, anlagen of testis and ovary, and brain cortex. In eye-antenna disk, highest expression is anterior to morphogenetic furrow, levels remain high in photoreceptor precursor cells. This pattern is reversed in posterior eye disk. In adults expression is high in brain cortex and thoracic and abdominal ganglia.

The protein localises to the membrane. It catalyses the reaction L-tyrosyl-[protein] + ATP = O-phospho-L-tyrosyl-[protein] + ADP + H(+). Its function is as follows. Receptor tyrosine kinase, binding ligands of the EGF family and activating several signaling cascades to convert extracellular cues into appropriate cellular responses. Known ligands include spitz, gurken, vein and giant-lens. Transduces the signal through the ras-raf-MAPK pathway. Critical for the proliferation of imaginal tissues, and for the determination of both the antero-posterior and dorso-ventral polarities of the oocyte. In the embryo, plays a role in the establishment of ventral cell fates, maintenance of amnioserosa and ventral neuroectodermal cells, germ band retraction, cell fate specification in the central nervous system, and production and repair of the cuticle. During dorsal closure (DC) functions with the dpp- and ACK-signaling pathways to regulate expression of the myosin zip in the embryonic epidermis and amnioserosa (AS), and thus coordinate the progression of epidermal cell shape changes required for correct DC. In the embryonic epidermis, functions by negatively regulating dpp and consequently the dpp-dependent expression of the myosin zip. In the AS, negatively regulates the production/ and or secretion of a diffusible signal which, is produced by the ACK-signaling pathway, and acts in the AS and epidermal cells to promote zip expression. Also required in the AS to inhibit or delay apoptosis, and consequently slow the rate of DC. Therefore functions at multiple levels to negatively regulate morphogenesis during DC, suggesting that it acts as a general brake mechanism for adjusting the rate of dorsal closure to ensure that closure proceeds smoothly and without loss of epidermal integrity. During oogenesis, one of two tyrosine kinase chemoattractant receptors (Egfr and Pvr), that function in the border cells (BC) to detect guidance cues from the oocyte and transduce this information to the guidance pathway that regulate the collective migration of the BC cluster through the nurse cells to the oocyte. The protein is Epidermal growth factor receptor (Egfr) of Drosophila melanogaster (Fruit fly).